A 123-amino-acid chain; its full sequence is Putative oocyte-secreted protein 1 homolog (123 aa).

Positions 1–26 (MKTILGFKGLFYLHSLIWTCAGDWSA) are cleaved as a signal peptide.

It belongs to the PLAC1 family.

The protein localises to the secreted. May be involved in cell differentiation. This Homo sapiens (Human) protein is Putative oocyte-secreted protein 1 homolog (OOSP1).